We begin with the raw amino-acid sequence, 271 residues long: Bifunctional protein FolD (271 aa).

Residues 154 to 156 (GRS), Ser-181, and Ile-222 contribute to the NADP(+) site.

This sequence belongs to the tetrahydrofolate dehydrogenase/cyclohydrolase family. In terms of assembly, homodimer.

The enzyme catalyses (6R)-5,10-methylene-5,6,7,8-tetrahydrofolate + NADP(+) = (6R)-5,10-methenyltetrahydrofolate + NADPH. The catalysed reaction is (6R)-5,10-methenyltetrahydrofolate + H2O = (6R)-10-formyltetrahydrofolate + H(+). It functions in the pathway one-carbon metabolism; tetrahydrofolate interconversion. Its function is as follows. Catalyzes the oxidation of 5,10-methylenetetrahydrofolate to 5,10-methenyltetrahydrofolate and then the hydrolysis of 5,10-methenyltetrahydrofolate to 10-formyltetrahydrofolate. This Thermotoga sp. (strain RQ2) protein is Bifunctional protein FolD.